Reading from the N-terminus, the 304-residue chain is tRNA dimethylallyltransferase (304 aa).

An ATP-binding site is contributed by 16-23 (GPTASGKS). Residue 18 to 23 (TASGKS) participates in substrate binding. 2 interaction with substrate tRNA regions span residues 41–44 (DSMQ) and 165–169 (QRIIR).

It belongs to the IPP transferase family. As to quaternary structure, monomer. Mg(2+) is required as a cofactor.

The catalysed reaction is adenosine(37) in tRNA + dimethylallyl diphosphate = N(6)-dimethylallyladenosine(37) in tRNA + diphosphate. Catalyzes the transfer of a dimethylallyl group onto the adenine at position 37 in tRNAs that read codons beginning with uridine, leading to the formation of N6-(dimethylallyl)adenosine (i(6)A). The chain is tRNA dimethylallyltransferase from Allorhizobium ampelinum (strain ATCC BAA-846 / DSM 112012 / S4) (Agrobacterium vitis (strain S4)).